The sequence spans 345 residues: Biotin synthase (345 aa).

Residues 66 to 291 form the Radical SAM core domain; sequence PEVEVEGIIS…RTMLRFAGGR (226 aa). [4Fe-4S] cluster is bound by residues Cys81, Cys85, and Cys88. [2Fe-2S] cluster contacts are provided by Cys124, Cys157, Cys216, and Arg286.

This sequence belongs to the radical SAM superfamily. Biotin synthase family. In terms of assembly, homodimer. [4Fe-4S] cluster is required as a cofactor. It depends on [2Fe-2S] cluster as a cofactor.

It carries out the reaction (4R,5S)-dethiobiotin + (sulfur carrier)-SH + 2 reduced [2Fe-2S]-[ferredoxin] + 2 S-adenosyl-L-methionine = (sulfur carrier)-H + biotin + 2 5'-deoxyadenosine + 2 L-methionine + 2 oxidized [2Fe-2S]-[ferredoxin]. It participates in cofactor biosynthesis; biotin biosynthesis; biotin from 7,8-diaminononanoate: step 2/2. Its function is as follows. Catalyzes the conversion of dethiobiotin (DTB) to biotin by the insertion of a sulfur atom into dethiobiotin via a radical-based mechanism. The sequence is that of Biotin synthase from Mycobacterium avium (strain 104).